The chain runs to 393 residues: 1-deoxy-D-xylulose 5-phosphate reductoisomerase (393 aa).

NADPH is bound by residues T16, G17, S18, I19, A42, R43, N44, and N127. K128 lines the 1-deoxy-D-xylulose 5-phosphate pocket. E129 lines the NADPH pocket. D153 serves as a coordination point for Mn(2+). 4 residues coordinate 1-deoxy-D-xylulose 5-phosphate: S154, E155, S179, and H202. E155 is a Mn(2+) binding site. G208 is an NADPH binding site. 1-deoxy-D-xylulose 5-phosphate contacts are provided by S215, N220, K221, and E224. E224 contacts Mn(2+).

It belongs to the DXR family. Mg(2+) serves as cofactor. Mn(2+) is required as a cofactor.

It carries out the reaction 2-C-methyl-D-erythritol 4-phosphate + NADP(+) = 1-deoxy-D-xylulose 5-phosphate + NADPH + H(+). Its pathway is isoprenoid biosynthesis; isopentenyl diphosphate biosynthesis via DXP pathway; isopentenyl diphosphate from 1-deoxy-D-xylulose 5-phosphate: step 1/6. Its function is as follows. Catalyzes the NADPH-dependent rearrangement and reduction of 1-deoxy-D-xylulose-5-phosphate (DXP) to 2-C-methyl-D-erythritol 4-phosphate (MEP). In Jannaschia sp. (strain CCS1), this protein is 1-deoxy-D-xylulose 5-phosphate reductoisomerase.